Here is a 2324-residue protein sequence, read N- to C-terminus: Acetyl-CoA carboxylase (2324 aa).

The residue at position 1 (M1) is an N-acetylmethionine. Positions 1–34 are disordered; sequence MEESSQPAKPLEMNPHSRFIIGSVSEDNSEDETS. Phosphoserine is present on residues S78 and S80. In terms of domain architecture, Biotin carboxylation spans 117–618; the sequence is VIEKVLIANN…DTGWLDRLIA (502 aa). The ATP-grasp domain occupies 275–466; it reads QKRILNVPQE…LPAAQLQIAM (192 aa). Position 315–320 (315–320) interacts with ATP; that stretch reads GGGGKG. Mn(2+) contacts are provided by E424, E437, and N439. R441 is an active-site residue. Residues 745-819 enclose the Biotinyl-binding domain; sequence FEKENDPSIL…DPGCVIAKLQ (75 aa). K786 bears the N6-biotinyllysine mark. S1193 bears the Phosphoserine mark. In terms of domain architecture, CoA carboxyltransferase N-terminal spans 1553–1891; sequence PYVTKDLLQS…SVYSPVPILK (339 aa). Residues 1553 to 2211 are carboxyltransferase; sequence PYVTKDLLQS…EDVVKKKIHD (659 aa). R1800, K2104, and R2106 together coordinate CoA. Residues 1895 to 2211 form the CoA carboxyltransferase C-terminal domain; it reads PIDRTIDFVP…EDVVKKKIHD (317 aa).

Requires biotin as cofactor. Mn(2+) serves as cofactor.

The protein localises to the cytoplasm. The enzyme catalyses hydrogencarbonate + acetyl-CoA + ATP = malonyl-CoA + ADP + phosphate + H(+). It carries out the reaction N(6)-biotinyl-L-lysyl-[protein] + hydrogencarbonate + ATP = N(6)-carboxybiotinyl-L-lysyl-[protein] + ADP + phosphate + H(+). It functions in the pathway lipid metabolism; malonyl-CoA biosynthesis; malonyl-CoA from acetyl-CoA: step 1/1. With respect to regulation, by phosphorylation. Its function is as follows. Catalyzes the rate-limiting reaction in the biogenesis of long-chain fatty acids. Carries out three functions: biotin carboxyl carrier protein, biotin carboxylase and carboxyltransferase. The polypeptide is Acetyl-CoA carboxylase (ACAC) (Gallus gallus (Chicken)).